A 167-amino-acid chain; its full sequence is Transmembrane protein 229B (167 aa).

Over 1-14 the chain is Cytoplasmic; sequence MAAAEPLTAFSRWY. Residues 15 to 35 form a helical membrane-spanning segment; it reads LYAIHGYFCEVMFTAAWEFVV. The Extracellular portion of the chain corresponds to 36-40; it reads NFNWK. Residues 41 to 61 form a helical membrane-spanning segment; sequence FPGVTSVWALFIYGTSILIVE. Residues 62–72 lie on the Cytoplasmic side of the membrane; the sequence is KMYLYLKDKCH. The chain crosses the membrane as a helical span at residues 73-93; sequence ILVRCFIYTLWTYLWEFTTGL. The Extracellular segment spans residues 94-109; the sequence is ILRQFNACPWDYSQFD. A helical transmembrane segment spans residues 110-130; that stretch reads FDFMGLITLEYAIPWFCASFI. At 131–167 the chain is on the cytoplasmic side; sequence MEQLVIRNTLRLRFDETAEPGAPTVPVALANGHVKTD.

It belongs to the TMEM229 family.

The protein resides in the membrane. The sequence is that of Transmembrane protein 229B (TMEM229B) from Gallus gallus (Chicken).